The primary structure comprises 397 residues: Xylose isomerase (397 aa).

Residues histidine 54 and aspartate 57 contribute to the active site. Mg(2+)-binding residues include glutamate 181, glutamate 217, histidine 220, aspartate 245, aspartate 255, aspartate 257, and aspartate 293.

Belongs to the xylose isomerase family. In terms of assembly, homotetramer. It depends on Mg(2+) as a cofactor.

Its subcellular location is the cytoplasm. It catalyses the reaction alpha-D-xylose = alpha-D-xylulofuranose. The chain is Xylose isomerase from Clavibacter michiganensis subsp. michiganensis (strain NCPPB 382).